The sequence spans 105 residues: Large ribosomal subunit protein bL21 (105 aa).

It belongs to the bacterial ribosomal protein bL21 family. As to quaternary structure, part of the 50S ribosomal subunit. Contacts protein L20.

This protein binds to 23S rRNA in the presence of protein L20. In Dictyoglomus turgidum (strain DSM 6724 / Z-1310), this protein is Large ribosomal subunit protein bL21.